A 160-amino-acid polypeptide reads, in one-letter code: Nucleotide-binding protein AHA_1129 (160 aa).

It belongs to the YajQ family.

Functionally, nucleotide-binding protein. The polypeptide is Nucleotide-binding protein AHA_1129 (Aeromonas hydrophila subsp. hydrophila (strain ATCC 7966 / DSM 30187 / BCRC 13018 / CCUG 14551 / JCM 1027 / KCTC 2358 / NCIMB 9240 / NCTC 8049)).